Reading from the N-terminus, the 321-residue chain is Ubiquitin-conjugating enzyme E2 U (321 aa).

One can recognise a UBC core domain in the interval 4–153 (RAYLLLHRDF…LRLFNRPLQM (150 aa)). Cys-89 serves as the catalytic Glycyl thioester intermediate. Positions 285–321 (WKSDTSLYENDTDEPREEEVEDLISWTNTLNTNTSED) are disordered. Positions 294–306 (NDTDEPREEEVED) are enriched in acidic residues. The span at 309–321 (SWTNTLNTNTSED) shows a compositional bias: polar residues.

It belongs to the ubiquitin-conjugating enzyme family. In terms of processing, autoubiquitinated in vitro in the presence of UBR5.

It carries out the reaction S-ubiquitinyl-[E1 ubiquitin-activating enzyme]-L-cysteine + [E2 ubiquitin-conjugating enzyme]-L-cysteine = [E1 ubiquitin-activating enzyme]-L-cysteine + S-ubiquitinyl-[E2 ubiquitin-conjugating enzyme]-L-cysteine.. Its pathway is protein modification; protein ubiquitination. Its function is as follows. Catalyzes the covalent attachment of ubiquitin to other proteins. The sequence is that of Ubiquitin-conjugating enzyme E2 U (UBE2U) from Homo sapiens (Human).